The primary structure comprises 4743 residues: Apolipoprotein B-100 (4743 aa).

The signal sequence occupies residues 1 to 27; the sequence is MGPQRPALRAPLLLLFLLLFLDTSVWA. The segment at 29 to 113 is heparin-binding; it reads DATRFKHLRK…KNSEEFASAM (85 aa). In terms of domain architecture, Vitellogenin spans 33–660; it reads FKHLRKYVYS…PSSYLPKESM (628 aa). The cysteines at positions 65 and 84 are disulfide-linked. A glycan (N-linked (GlcNAc...) asparagine) is linked at asparagine 172. Intrachain disulfides connect cysteine 173-cysteine 199, cysteine 232-cysteine 248, cysteine 372-cysteine 377, and cysteine 466-cysteine 501. The heparin-binding stretch occupies residues 219-293; the sequence is VRPLSTLISS…RFFRGGINQV (75 aa). The segment at 890–947 is heparin-binding; sequence NTNFFHESGLEARVALKAGQLKVIIPSPKRPVKLFSGSNTLHLVSTTKTEVIPPLIEN. Cysteine 954 and cysteine 964 are joined by a disulfide. 4 N-linked (GlcNAc...) asparagine glycosylation sites follow: asparagine 971, asparagine 1336, asparagine 1345, and asparagine 1491. N6-acetyllysine is present on lysine 1973. At serine 2006 the chain carries Phosphoserine. Positions 2010–2145 are heparin-binding; the sequence is NDAFDEPREF…EKLSQLETYA (136 aa). Residues asparagine 2094, asparagine 2522, asparagine 2662, asparagine 2741, asparagine 2791, asparagine 2897, asparagine 2944, and asparagine 3063 are each glycosylated (N-linked (GlcNAc...) asparagine). Residues 3123–3198 are heparin-binding; it reads FLKTTKQSFD…KIKFDKYKTE (76 aa). The segment at 3136–3146 is basic (possible receptor binding region); it reads KAQYKKNRDKH. Asparagine 3186, asparagine 3299, and asparagine 3321 each carry an N-linked (GlcNAc...) asparagine glycan. An LDL receptor binding region spans residues 3336 to 3356; that stretch reads VTDALQYKLEGTSRLMRKKVL. Residues 3346 to 3479 are heparin-binding; sequence GTSRLMRKKV…QEYSGSVANE (134 aa). Residues 3349–3357 form a basic (possible receptor binding region) region; sequence RLMRKKVLK. Residues asparagine 3428, asparagine 3715, and asparagine 3828 are each glycosylated (N-linked (GlcNAc...) asparagine). Phosphoserine is present on serine 3981. Threonine 3985 carries the phosphothreonine modification. 2 N-linked (GlcNAc...) asparagine glycosylation sites follow: asparagine 4203 and asparagine 4232.

Interacts with PCSK9. Interacts with MTTP. Interacts with AUP1. Interacts with CIDEB. In terms of processing, palmitoylated; structural requirement for proper assembly of the hydrophobic core of the lipoprotein particle. As to expression, detected in intestine and liver (at protein level).

The protein localises to the cytoplasm. Its subcellular location is the secreted. The protein resides in the lipid droplet. Its function is as follows. Apolipoprotein B is a major protein constituent of chylomicrons (apo B-48), LDL (apo B-100) and VLDL (apo B-100). Apo B-100 functions as a recognition signal for the cellular binding and internalization of LDL particles by the apoB/E receptor. This is Apolipoprotein B-100 (Apob) from Rattus norvegicus (Rat).